The chain runs to 567 residues: MSNISRQAYADMFGPTVGDKVRLADTELWIEVEDDLTTYGEEVKFGGGKVIRDGMGQGQMLAADCVDLVLTNALIVDHWGIVKADIGVKDGRIFAIGKAGNPDIQPNVTIPIGAATEVIAAEGKIVTAGGIDTHIHWICPQQAEEALVSGVTTMVGGGTGPAAGTHATTCTPGPWYISRMLQAADSLPVNIGLLGKGNVSQPDALREQVAAGVIGLKIHEDWGATPAAIDCALTVADEMDIQVALHSDTLNESGFVEDTLAAIGGRTIHTFHTEGAGGGHAPDIITACAHPNILPSSTNPTLPYTLNTIDEHLDMLMVCHHLDPDIAEDVAFAESRIRRETIAAEDVLHDLGAFSLTSSDSQAMGRVGEVVLRTWQVAHRMKVQRGALAEETGDNDNFRVKRYIAKYTINPALTHGIAHEVGSIEVGKLADLVVWSPAFFGVKPATVIKGGMIAIAPMGDINASIPTPQPVHYRPMFGALGSARHHCRLTFLSQAAADNGVAERLNLRSAIAVVKGCRTVQKADMVHNSLQPNITVDTQTYEVRVDGELITSEPADVLPMAQRYFLF.

One can recognise a Urease domain in the interval 129–567 (GGIDTHIHWI…LPMAQRYFLF (439 aa)). Positions 134, 136, and 217 each coordinate Ni(2+). Lysine 217 is modified (N6-carboxylysine). Histidine 219 lines the substrate pocket. 2 residues coordinate Ni(2+): histidine 246 and histidine 272. Histidine 320 serves as the catalytic Proton donor. Aspartate 360 contributes to the Ni(2+) binding site.

Belongs to the metallo-dependent hydrolases superfamily. Urease alpha subunit family. Heterotrimer of UreA (gamma), UreB (beta) and UreC (alpha) subunits. Three heterotrimers associate to form the active enzyme. Ni cation serves as cofactor. In terms of processing, carboxylation allows a single lysine to coordinate two nickel ions.

The protein resides in the cytoplasm. It catalyses the reaction urea + 2 H2O + H(+) = hydrogencarbonate + 2 NH4(+). It participates in nitrogen metabolism; urea degradation; CO(2) and NH(3) from urea (urease route): step 1/1. The chain is Urease subunit alpha from Klebsiella pneumoniae (strain 342).